The following is a 112-amino-acid chain: Diuretic hormone class 2 (112 aa).

The first 24 residues, 1–24 (MVRATCLLASCVLFALLLIVPASA), serve as a signal peptide directing secretion. A propeptide spanning residues 25–71 (YPRYPSNYFREEGQYEPEEIMDMLNRLGNLIQMERKMENYKEDITSE) is cleaved from the precursor. The residue at position 104 (P104) is a Proline amide. Residues 108-112 (RRDAH) constitute a propeptide that is removed on maturation.

Expressed in corpora cardiaca (CC), corpora allata (CA), antennal lobe (AL) and gnathal ganglion (GNG) (at protein level). Expression in CC, CA and AL detected in most animals, expression in GNG in few animals (at protein level).

The protein resides in the secreted. In terms of biological role, regulation of fluid secretion. Stimulates Malpighian tubule fluid secretion. The chain is Diuretic hormone class 2 from Agrotis ipsilon (Black cutworm moth).